We begin with the raw amino-acid sequence, 82 residues long: Small ribosomal subunit protein bS16 (82 aa).

This sequence belongs to the bacterial ribosomal protein bS16 family.

This chain is Small ribosomal subunit protein bS16, found in Enterobacter sp. (strain 638).